A 311-amino-acid polypeptide reads, in one-letter code: 4-hydroxy-tetrahydrodipicolinate synthase (311 aa).

Position 49 (T49) interacts with pyruvate. The active-site Proton donor/acceptor is the Y138. K166 functions as the Schiff-base intermediate with substrate in the catalytic mechanism. I207 is a pyruvate binding site.

Belongs to the DapA family. As to quaternary structure, homotetramer; dimer of dimers.

The protein resides in the cytoplasm. The enzyme catalyses L-aspartate 4-semialdehyde + pyruvate = (2S,4S)-4-hydroxy-2,3,4,5-tetrahydrodipicolinate + H2O + H(+). It functions in the pathway amino-acid biosynthesis; L-lysine biosynthesis via DAP pathway; (S)-tetrahydrodipicolinate from L-aspartate: step 3/4. Catalyzes the condensation of (S)-aspartate-beta-semialdehyde [(S)-ASA] and pyruvate to 4-hydroxy-tetrahydrodipicolinate (HTPA). The chain is 4-hydroxy-tetrahydrodipicolinate synthase from Lactobacillus acidophilus (strain ATCC 700396 / NCK56 / N2 / NCFM).